Reading from the N-terminus, the 428-residue chain is ATP-dependent RNA helicase RhlB (428 aa).

The Q motif motif lies at 9-37 (QKFSDFALHPLVLEALEKKGFQHCTPIQA). The Helicase ATP-binding domain occupies 40–219 (LPLTLSGRDV…FEQMNNAEYV (180 aa)). 53–60 (AQTGTGKT) contacts ATP. Positions 165–168 (DEAD) match the DEAD box motif. The Helicase C-terminal domain maps to 245 to 390 (RLLQTLIEEE…VSKYNSDALL (146 aa)). The disordered stretch occupies residues 392–428 (DLPAPKRLARPRGGNGPRRNSAPRRGGAPRNNRKRSG). Low complexity predominate over residues 408-421 (PRRNSAPRRGGAPR).

This sequence belongs to the DEAD box helicase family. RhlB subfamily. Component of the RNA degradosome, which is a multiprotein complex involved in RNA processing and mRNA degradation.

It localises to the cytoplasm. The enzyme catalyses ATP + H2O = ADP + phosphate + H(+). DEAD-box RNA helicase involved in RNA degradation. Has RNA-dependent ATPase activity and unwinds double-stranded RNA. In Serratia proteamaculans (strain 568), this protein is ATP-dependent RNA helicase RhlB.